The primary structure comprises 248 residues: MELATPRFRPDPSLSREAMETLQHDIAAAASFENEASPSPAAIRDGDALVAGVDQAFLDDRAVSAVVVLRGGEVVAREHAVTPLSIPYIPGLLAFREGGPIIDALSRLDVEPDLLVVDGSGRIHFREAGLATHAGLLFDVPAVGVAKRLLCGEPSRTVASLPEGTRVPIEADDSMTAADGTVVGYAYQSRQYPDSKRINPLYISPGHRLCAETAVDCVAACGGEYKLPRPTRLADGHADDLKARYGDG.

Asp54 and Asp118 together coordinate Mg(2+).

The protein belongs to the endonuclease V family. Mg(2+) serves as cofactor.

The protein resides in the cytoplasm. The catalysed reaction is Endonucleolytic cleavage at apurinic or apyrimidinic sites to products with a 5'-phosphate.. Functionally, DNA repair enzyme involved in the repair of deaminated bases. Selectively cleaves double-stranded DNA at the second phosphodiester bond 3' to a deoxyinosine leaving behind the intact lesion on the nicked DNA. The polypeptide is Endonuclease V (Natronomonas pharaonis (strain ATCC 35678 / DSM 2160 / CIP 103997 / JCM 8858 / NBRC 14720 / NCIMB 2260 / Gabara) (Halobacterium pharaonis)).